Here is an 850-residue protein sequence, read N- to C-terminus: Adenylate cyclase (850 aa).

A catalytic region spans residues 1-535 (MYLYIETLKQ…DISHHFPLRL (535 aa)). The segment at 541–850 (KALYSPCEIR…SLPTKQCQLH (310 aa)) is regulatory.

Belongs to the adenylyl cyclase class-1 family.

Its subcellular location is the cytoplasm. It carries out the reaction ATP = 3',5'-cyclic AMP + diphosphate. With respect to regulation, the regulatory domain is involved in the regulation of cyclase activity by the carbon source. The chain is Adenylate cyclase (cya) from Yersinia pestis.